The following is a 513-amino-acid chain: Protein indeterminate-domain 11 (513 aa).

The segment at 1 to 84 (MMNKDMLLHQ…QPGNPDPESE (84 aa)) is disordered. A compositionally biased stretch (polar residues) spans 10–45 (QHQQPQQDENMSNLTSASGDQASVSSGNITEASGSN). Residues 51 to 60 (QQQQEQQQQQ) are compositionally biased toward low complexity. Phosphoserine is present on Ser89. C2H2-type zinc fingers lie at residues 99–121 (FVCE…RRGH) and 141–171 (YVCP…CRKH). The short motif at 163 to 170 (IKKHFCRK) is the Nuclear localization signal element. A C2H2-type 2; degenerate zinc finger spans residues 176 to 199 (WKCDKCSKKYAVQSDCKAHSKTCG). Residues Cys178, Cys181, His194, Cys198, Cys205, Cys207, His220, and Cys224 each coordinate Zn(2+). Residues 203-226 (YRCDCGTLFSRRDSFITHRAFCEA) form a CCHC-type 2; atypical zinc finger. An SHR-binding region spans residues 213 to 225 (RRDSFITHRAFCE). Disordered regions lie at residues 255–280 (ASHP…SHNH) and 334–358 (PQPH…SLFS). A compositionally biased stretch (low complexity) spans 264-280 (TQPTINVSSSSSSSHNH).

It localises to the nucleus. Functionally, probable transcription factor. The polypeptide is Protein indeterminate-domain 11 (Arabidopsis thaliana (Mouse-ear cress)).